Here is a 31-residue protein sequence, read N- to C-terminus: Photosystem II reaction center protein T (31 aa).

A helical membrane pass occupies residues 3-23 (SVAYILVLTMALSVIFFAIAF).

It belongs to the PsbT family. As to quaternary structure, PSII is composed of 1 copy each of membrane proteins PsbA, PsbB, PsbC, PsbD, PsbE, PsbF, PsbH, PsbI, PsbJ, PsbK, PsbL, PsbM, PsbT, PsbX, PsbY, PsbZ, Psb30/Ycf12, peripheral proteins PsbO, CyanoQ (PsbQ), PsbU, PsbV and a large number of cofactors. It forms dimeric complexes.

The protein localises to the cellular thylakoid membrane. Functionally, found at the monomer-monomer interface of the photosystem II (PS II) dimer, plays a role in assembly and dimerization of PSII. PSII is a light-driven water plastoquinone oxidoreductase, using light energy to abstract electrons from H(2)O, generating a proton gradient subsequently used for ATP formation. The chain is Photosystem II reaction center protein T from Microcystis aeruginosa (strain NIES-843 / IAM M-2473).